The following is a 332-amino-acid chain: Melanocortin receptor 4 (332 aa).

Residues 1–43 (MNSTHHHGMHTSLHFWNRSTYGLHSNASEPLGKGYSEGGCYEQ) lie on the Extracellular side of the membrane. Residues asparagine 2, asparagine 17, and asparagine 26 are each glycosylated (N-linked (GlcNAc...) asparagine). Disulfide bonds link cysteine 40-cysteine 279 and cysteine 271-cysteine 277. A helical membrane pass occupies residues 44–69 (LFVSPEVFVTLGVISLLENILVIVAI). Over 70-81 (AKNKNLHSPMYF) the chain is Cytoplasmic. Residues 82 to 106 (FICSLAVADMLVSVSNGSETIVITL) form a helical membrane-spanning segment. Glutamate 100, aspartate 122, and aspartate 126 together coordinate Ca(2+). Residues 107 to 123 (LNSTDTDAQSFTVNIDN) are Extracellular-facing. The helical transmembrane segment at 124–145 (VIDSVICSSLLASICSLLSIAV) threads the bilayer. Over 146 to 165 (DRYFTIFYALQYHNIMTVKR) the chain is Cytoplasmic. A helical membrane pass occupies residues 166–186 (VGIIISCIWAVCTVSGVLFII). Residues 187–191 (YSDSS) are Extracellular-facing. Residues 192 to 215 (AVIICLITVFFTMLALMASLYVHM) traverse the membrane as a helical segment. Over 216–248 (FLMARLHIKRIAVLPGTGTIRQGANMKGAITLT) the chain is Cytoplasmic. The chain crosses the membrane as a helical span at residues 249–271 (ILIGVFVVCWAPFFLHLIFYISC). The Extracellular portion of the chain corresponds to 272 to 280 (PQNPYCVCF). Residues 281–304 (MSHFNLYLILIMCNSIIDPLIYAL) traverse the membrane as a helical segment. Residues 305–332 (RSQELRKTFKEIICCYPLGGLCDLSSRY) lie on the Cytoplasmic side of the membrane. Cysteine 318 carries the S-palmitoyl cysteine lipid modification.

The protein belongs to the G-protein coupled receptor 1 family. In terms of assembly, homodimer; disulfide-linked, also forms higher order oligomers. Interacts with GNAS. Interacts with ATRNL1. Interacts with MGRN1; this interaction competes with GNAS-binding and thus inhibits agonist-induced cAMP production. Interacts with MRAP and MRAP2; these associated factors increase ligand-sensitivity and generation of cAMP.

It localises to the cell membrane. Functionally, hormone receptor that acts as a key component of the leptin-melanocortin pathway at the intersection of homeostatic maintenance of energetic state. Plays a role in regulating food intake: activation by a stimulating hormone such as anorexigenic alpha-melanocyte stimulating hormone (alpha-MSH) inhibits appetite, whereas binding to a natural antagonist like Agouti-related protein/AGRP promotes appetite. G-protein-coupled receptor that activates conventional Galphas signaling leading to induction of anorexogenic signaling in the hypothalamus to result in negative energy balance. Regulates the firing activity of neurons from the hypothalamus by alpha-MSH and AGRP independently of Galphas signaling by ligand-induced coupling of closure of inwardly rectifying potassium channel KCNJ13. In intestinal epithelial cells, plays a role in the inhibition of hepatic glucose production via nesfatin-1/NUCB2 leading to increased cyclic adenosine monophosphate (cAMP) levels and glucagon-like peptide 1 (GLP-1) secretion in the intestinal epithelium. This is Melanocortin receptor 4 (MC4R) from Sus scrofa (Pig).